Reading from the N-terminus, the 476-residue chain is Cytosolic iron-sulfur assembly component 3 (476 aa).

The residue at position 2 (A2) is an N-acetylalanine. [4Fe-4S] cluster-binding residues include C24, C71, C74, C77, C190, C246, C395, and C399.

It belongs to the NARF family. External component of the CIA complex. In the CIA complex, interacts directly with CIAO1 and MMS19.

Component of the cytosolic iron-sulfur protein assembly (CIA) complex, a multiprotein complex that mediates the incorporation of iron-sulfur cluster into extramitochondrial Fe/S proteins. Seems to negatively regulate the level of HIF1A expression, although this effect could be indirect. In Rattus norvegicus (Rat), this protein is Cytosolic iron-sulfur assembly component 3.